A 534-amino-acid polypeptide reads, in one-letter code: Hypothemycin biosynthesis cluster protein hpm4 (534 aa).

Disordered regions lie at residues 34-61, 110-130, and 236-287; these read IEPA…SDGP, LQSP…PLRL, and DGTG…KKCI. Low complexity-rich tracts occupy residues 112–127 and 258–275; these read SPTT…SCAP and TVSS…ACQT.

It functions in the pathway secondary metabolite biosynthesis. Its function is as follows. Part of the gene cluster that mediates the biosynthesis of hypothemycin, a resorcylic acid lactone (RAL) that irreversibly inhibits a subset of protein kinases with a conserved cysteine in the ATP binding site such as human ERK2. The first step is performed by both PKSs hmp3 and hmp8 and leads to the production of 7',8'-dehydrozearalenol (DHZ). The highly reducing PKS hpm8 synthesizes the reduced hexaketide (7S,11S,2E,8E)-7,11-dihydroxy-dodeca-2,8-dienoate, which is transferred downstream to the non-reducing PKS hpm3. Hpm3 then extends the reduced hexaketide to a nonaketide, after which regioselective cyclization and macrolactonization affords DHZ. The next step is the conversion of DHZ into aigialomycin C and is performed by the O-methyltransferase hmp5, the FAD-binding monooxygenase hmp7, and the cytochrome P450 monooxygenase hmp1. The wide substrate tolerance of the hmp5 and hmp7 implies that the reactions from DHZ to aigialomycin C can occur in any order. The steps from aigialomycin C to hypothemycin are less well established. The FAD-linked oxidoreductase hmp9 presumably catalyzes oxidation of the C-6' hydroxyl to a ketone. The timing of this oxidation is important, since the resulting enone functional group is a Michael acceptor that can react spontaneously with glutathione, an abundant metabolite in fungal cells. The glutathione S-transferase hmp2 catalyzes cis-trans isomerization of the 7',8' double bond with equilibrium favoring the trans isomer. The hpm6-encoded transporter might preferentially pump hypothemycin out of the cell relative to the trans isomer aigialomycin A. The cis-to-trans isomerization may be coupled with C-4' hydroxylation, since all known hypothemycin analogs containing the enone functional group also have hydroxyl groups at both C-4' and C-5'. This Hypomyces subiculosus (Nectria subiculosa) protein is Hypothemycin biosynthesis cluster protein hpm4.